The primary structure comprises 309 residues: Mitochondrial import receptor subunit TOM34 (309 aa).

The residue at position 8 (Ser-8) is a Phosphoserine. 3 TPR repeats span residues 9–42 (VEELRAAGNESFRNGQYAEASALYGRALRVLQAQ), 51–84 (SVLYSNRAACHLKDGNCRDCIKDCTSALALVPFS), and 86–118 (KPLLRRASAYEALEKYPMAYVDYKTVLQIDDNV). Phosphoserine is present on Ser-160. The segment at 161–189 (LPSENHKEMAKSKSKETTATKNRVPSAGD) is disordered. A compositionally biased stretch (basic and acidic residues) spans 164–178 (ENHKEMAKSKSKETT). Ser-186 is subject to Phosphoserine. 3 TPR repeats span residues 193–226 (ARVLKEEGNELVKKGNHKKAIEKYSESLLCSNLE), 227–260 (SATYSNRALCYLVLKQYTEAVKDCTEALKLDGKN), and 262–294 (KAFYRRAQAHKALKDYKSSFADISNLLQIEPRN). Residue Lys-197 forms a Glycyl lysine isopeptide (Lys-Gly) (interchain with G-Cter in SUMO2) linkage.

It belongs to the Tom34 family. As to quaternary structure, interacts with HSP90A, VCP, ATP6V1D, KIAA0665, AMPK, and DMAP1 through its TPR repeat. In terms of tissue distribution, ubiquitous.

The protein localises to the cytoplasm. Its subcellular location is the mitochondrion outer membrane. Functionally, plays a role in the import of cytosolically synthesized preproteins into mitochondria. Binds the mature portion of precursor proteins. Interacts with cellular components, and possesses weak ATPase activity. May be a chaperone-like protein that helps to keep newly synthesized precursors in an unfolded import compatible state. In Homo sapiens (Human), this protein is Mitochondrial import receptor subunit TOM34 (TOMM34).